The chain runs to 418 residues: E3 ubiquitin-protein ligase pellino homolog 1 (418 aa).

The 188-residue stretch at 13–200 (APVKYGELIV…MHPRNGFTED (188 aa)) folds into the FHA; atypical domain. Serine 121 carries the post-translational modification Phosphoserine; by ATM. Threonine 127 carries the post-translational modification Phosphothreonine; by ATM. A ring-like domain; necessary for ubiqitination of RIPK3 region spans residues 311 to 399 (CGHVHGYHNW…TFHAACPFCA (89 aa)).

This sequence belongs to the pellino family. As to quaternary structure, interacts with MAP3K7. Upon IL1B treatment, forms a complex with TRAF6, IRAK1, IRAK4 and MYD88; this complex recruits MAP3K7/TAK1, TAB1 and TAB2 to mediate NF-kappa-B activation. Direct binding of SMAD6 to PELI1 prevents the complex formation and hence negatively regulates IL1R-TLR signaling and eventually NF-kappa-B-mediated gene expression. Interacts (via atypical FHA domain) with RIPK3; preferentially binds to the 'Thr-182' phosphorylated form of RIPK3. Interacts with RIPK1 and IRAK1. Phosphorylation by IRAK1 and IRAK4 enhances its E3 ligase activity. Phosphorylated by ATM in response to DNA damage, promoting localization to DNA double-strand breaks (DSBs) and ability to mediate 'Lys-63'-linked ubiquitination of NBN. Post-translationally, sumoylated. Expressed at high levels in normal skin but decreased in keratinocytes from toxic epidermal necrolysis (TEN) patients (at protein level).

The protein resides in the chromosome. The catalysed reaction is S-ubiquitinyl-[E2 ubiquitin-conjugating enzyme]-L-cysteine + [acceptor protein]-L-lysine = [E2 ubiquitin-conjugating enzyme]-L-cysteine + N(6)-ubiquitinyl-[acceptor protein]-L-lysine.. It participates in protein modification; protein ubiquitination. Functionally, E3 ubiquitin ligase catalyzing the covalent attachment of ubiquitin moieties onto substrate proteins. Involved in the TLR and IL-1 signaling pathways via interaction with the complex containing IRAK kinases and TRAF6. Acts as a positive regulator of inflammatory response in microglia through activation of NF-kappa-B and MAP kinase. Mediates 'Lys-63'-linked polyubiquitination of IRAK1 allowing subsequent NF-kappa-B activation. Conjugates 'Lys-63'-linked ubiquitin chains to the adapter protein ASC/PYCARD, which in turn is crucial for NLRP3 inflammasome activation. Mediates 'Lys-48'-linked polyubiquitination of RIPK3 leading to its subsequent proteasome-dependent degradation; preferentially recognizes and mediates the degradation of the 'Thr-182' phosphorylated form of RIPK3. Negatively regulates necroptosis by reducing RIPK3 expression. Mediates 'Lys-63'-linked ubiquitination of RIPK1. Following phosphorylation by ATM, catalyzes 'Lys-63'-linked ubiquitination of NBN, promoting DNA repair via homologous recombination. Negatively regulates activation of the metabolic mTORC1 signaling pathway by mediating 'Lys-63'-linked ubiquitination of mTORC1-inhibitory protein TSC1 and thereby promoting TSC1/TSC2 complex stability. This chain is E3 ubiquitin-protein ligase pellino homolog 1, found in Homo sapiens (Human).